We begin with the raw amino-acid sequence, 333 residues long: UPF0284 protein VNG_1572C (333 aa).

The protein belongs to the UPF0284 family.

The polypeptide is UPF0284 protein VNG_1572C (Halobacterium salinarum (strain ATCC 700922 / JCM 11081 / NRC-1) (Halobacterium halobium)).